The following is a 227-amino-acid chain: Isopentenyl-diphosphate Delta-isomerase 1 (227 aa).

Position 36 (Lys-36) interacts with substrate. Mg(2+) is bound by residues His-40 and His-51. Residues 49–199 (LLHRAFSVFL…EIKITPWFKI (151 aa)) form the Nudix hydrolase domain. The substrate site is built by Arg-70 and Lys-74. Cys-86 is a catalytic residue. Residue Ser-87 coordinates substrate. 2 residues coordinate Mg(2+): Glu-146 and Glu-148. Residue Glu-148 is part of the active site. The residue at position 176 (Lys-176) is an N6-acetyllysine. Positions 225-227 (YRM) match the Microbody targeting signal motif.

Belongs to the IPP isomerase type 1 family. As to quaternary structure, monomer. Mg(2+) serves as cofactor.

It is found in the peroxisome. It carries out the reaction isopentenyl diphosphate = dimethylallyl diphosphate. Its pathway is isoprenoid biosynthesis; dimethylallyl diphosphate biosynthesis; dimethylallyl diphosphate from isopentenyl diphosphate: step 1/1. Catalyzes the 1,3-allylic rearrangement of the homoallylic substrate isopentenyl (IPP) to its highly electrophilic allylic isomer, dimethylallyl diphosphate (DMAPP). In Homo sapiens (Human), this protein is Isopentenyl-diphosphate Delta-isomerase 1 (IDI1).